The sequence spans 439 residues: Proline--tRNA ligase (439 aa).

Belongs to the class-II aminoacyl-tRNA synthetase family. ProS type 2 subfamily. As to quaternary structure, homodimer.

Its subcellular location is the cytoplasm. It carries out the reaction tRNA(Pro) + L-proline + ATP = L-prolyl-tRNA(Pro) + AMP + diphosphate. Functionally, catalyzes the attachment of proline to tRNA(Pro) in a two-step reaction: proline is first activated by ATP to form Pro-AMP and then transferred to the acceptor end of tRNA(Pro). The protein is Proline--tRNA ligase of Rhodopseudomonas palustris (strain BisB5).